A 353-amino-acid chain; its full sequence is NADH-quinone oxidoreductase subunit H (353 aa).

The next 9 helical transmembrane spans lie at 8–28, 75–95, 108–128, 148–168, 178–198, 229–249, 258–278, 297–317, and 319–339; these read LLVYLVILFGFVIVSVLLFIW, GVFWLAPLVAFVPVMLMFAAI, IGILYILAVSSVTVIGIFMAG, VSYEIPLVLSILGVVMLTGSL, SVPFVLLQPLGFFVYLSAAMA, LFYLMEYAEVLAISAIATTLF, LHPVIWFITKVLIIFMFIIWV, FLLPLSLANLVITAFEILAAP, and MNTAVLIGINIAVMFGLILLF.

It belongs to the complex I subunit 1 family. In terms of assembly, NDH-1 is composed of 14 different subunits. Subunits NuoA, H, J, K, L, M, N constitute the membrane sector of the complex.

Its subcellular location is the cell membrane. The enzyme catalyses a quinone + NADH + 5 H(+)(in) = a quinol + NAD(+) + 4 H(+)(out). Its function is as follows. NDH-1 shuttles electrons from NADH, via FMN and iron-sulfur (Fe-S) centers, to quinones in the respiratory chain. The immediate electron acceptor for the enzyme in this species is believed to be ubiquinone. Couples the redox reaction to proton translocation (for every two electrons transferred, four hydrogen ions are translocated across the cytoplasmic membrane), and thus conserves the redox energy in a proton gradient. This subunit may bind ubiquinone. The sequence is that of NADH-quinone oxidoreductase subunit H from Dehalococcoides mccartyi (strain ATCC BAA-2266 / KCTC 15142 / 195) (Dehalococcoides ethenogenes (strain 195)).